The sequence spans 565 residues: Thiol:disulfide interchange protein DsbD (565 aa).

Residues 1 to 19 form the signal peptide; sequence MAQRIFTLILLLCSTSVFA. Residues 20 to 162 are Periplasmic-facing; that stretch reads GLFDAPGRSQ…VPQQEQPTAQ (143 aa). Cystine bridges form between C122-C128 and C182-C304. Residues 163 to 183 form a helical membrane-spanning segment; the sequence is LPFSALWALLIGIGIAFTPCV. The Cytoplasmic segment spans residues 184–207; the sequence is LPMYPLISGIVLGGKQRLSTARAL. The helical transmembrane segment at 208-228 threads the bilayer; sequence LLTFIYVQGMALTYTALGLVV. Residues 229 to 242 lie on the Periplasmic side of the membrane; it reads AAAGLQFQAALQHP. Residues 243–263 traverse the membrane as a helical segment; it reads YVLIGLTIVFTLLAMSMFGLL. Topologically, residues 264 to 295 are cytoplasmic; it reads TLQLPSSLQTRLTLMSNRQQGGSPGGVFIMGT. The helical transmembrane segment at 296–316 threads the bilayer; that stretch reads IAGLICSPCTTAPLSAILLYI. The Periplasmic portion of the chain corresponds to 317–322; it reads AQSGNM. The helical transmembrane segment at 323-343 threads the bilayer; sequence WLGGGTLYLYALGMGLPLMLI. At 344-356 the chain is on the cytoplasmic side; sequence TVFGNRLLPKSGP. The chain crosses the membrane as a helical span at residues 357 to 377; the sequence is WMEQVKTAFGFVILALPVFLL. Residues 378–383 lie on the Periplasmic side of the membrane; the sequence is ERVIGD. The chain crosses the membrane as a helical span at residues 384-404; that stretch reads VWGLRLWSALGVAFFGWAFIT. Residues 405-417 are Cytoplasmic-facing; the sequence is SLQAKRGWMRVVQ. The chain crosses the membrane as a helical span at residues 418 to 438; the sequence is IILLAAALVSVRPLQDWAFGA. The 132-residue stretch at 434–565 folds into the Thioredoxin domain; that stretch reads WAFGATHTAQ…FSAHLRDRQP (132 aa). Residues 439 to 565 are Periplasmic-facing; sequence THTAQTQTHL…FSAHLRDRQP (127 aa). C480 and C483 are joined by a disulfide.

It belongs to the thioredoxin family. DsbD subfamily.

It localises to the cell inner membrane. The catalysed reaction is [protein]-dithiol + NAD(+) = [protein]-disulfide + NADH + H(+). It carries out the reaction [protein]-dithiol + NADP(+) = [protein]-disulfide + NADPH + H(+). In terms of biological role, required to facilitate the formation of correct disulfide bonds in some periplasmic proteins and for the assembly of the periplasmic c-type cytochromes. Acts by transferring electrons from cytoplasmic thioredoxin to the periplasm. This transfer involves a cascade of disulfide bond formation and reduction steps. The protein is Thiol:disulfide interchange protein DsbD of Escherichia coli O157:H7.